The primary structure comprises 477 residues: Ribulose bisphosphate carboxylase large chain (477 aa).

Residues 1–2 (MS) constitute a propeptide that is removed on maturation. Proline 3 carries the N-acetylproline modification. N6,N6,N6-trimethyllysine is present on lysine 14. The substrate site is built by asparagine 123 and threonine 173. The active-site Proton acceptor is lysine 175. Lysine 177 is a binding site for substrate. Mg(2+)-binding residues include lysine 201, aspartate 203, and glutamate 204. Lysine 201 is subject to N6-carboxylysine. Catalysis depends on histidine 294, which acts as the Proton acceptor. Substrate contacts are provided by arginine 295, histidine 327, and serine 379.

It belongs to the RuBisCO large chain family. Type I subfamily. As to quaternary structure, heterohexadecamer of 8 large chains and 8 small chains; disulfide-linked. The disulfide link is formed within the large subunit homodimers. Mg(2+) is required as a cofactor. In terms of processing, the disulfide bond which can form in the large chain dimeric partners within the hexadecamer appears to be associated with oxidative stress and protein turnover.

It is found in the plastid. Its subcellular location is the chloroplast. It carries out the reaction 2 (2R)-3-phosphoglycerate + 2 H(+) = D-ribulose 1,5-bisphosphate + CO2 + H2O. The enzyme catalyses D-ribulose 1,5-bisphosphate + O2 = 2-phosphoglycolate + (2R)-3-phosphoglycerate + 2 H(+). Its function is as follows. RuBisCO catalyzes two reactions: the carboxylation of D-ribulose 1,5-bisphosphate, the primary event in carbon dioxide fixation, as well as the oxidative fragmentation of the pentose substrate in the photorespiration process. Both reactions occur simultaneously and in competition at the same active site. This Nicotiana otophora (Tobacco) protein is Ribulose bisphosphate carboxylase large chain.